Reading from the N-terminus, the 346-residue chain is Inner membrane protein YnjI (346 aa).

Residues 1 to 38 (MKKVLLQNHPGSEKYSFNGWEIFNSNFERMIKENKAML) are Periplasmic-facing. The chain crosses the membrane as a helical span at residues 39-59 (LCKWGFYLTCVVAVMFVFAAI). Residues 60 to 68 (TSNGLNERG) lie on the Cytoplasmic side of the membrane. The chain crosses the membrane as a helical span at residues 69-89 (LITAGCSFLYLLIMMGLIVRA). Residues 90 to 234 (GFKAKKEQLH…DCANHSSGKS (145 aa)) are Periplasmic-facing. A helical membrane pass occupies residues 235–255 (SAKLIWAAELSWMISISSTAF). The Cytoplasmic segment spans residues 256-346 (QNGTIEEELA…PWGASSVKYS (91 aa)).

Its subcellular location is the cell inner membrane. The polypeptide is Inner membrane protein YnjI (ynjI) (Escherichia coli (strain K12)).